The sequence spans 206 residues: N-(5'-phosphoribosyl)anthranilate isomerase (206 aa).

The protein belongs to the TrpF family.

It carries out the reaction N-(5-phospho-beta-D-ribosyl)anthranilate = 1-(2-carboxyphenylamino)-1-deoxy-D-ribulose 5-phosphate. The protein operates within amino-acid biosynthesis; L-tryptophan biosynthesis; L-tryptophan from chorismate: step 3/5. In Chlamydia felis (strain Fe/C-56) (Chlamydophila felis), this protein is N-(5'-phosphoribosyl)anthranilate isomerase.